The primary structure comprises 614 residues: Threonine--tRNA ligase (614 aa).

Positions Met-1–Arg-138 are editing domain. Catalytic regions lie at residues Asn-195–Pro-492 and Arg-196–Pro-492. Residues Cys-289, His-340, and His-461 each contribute to the Zn(2+) site.

It belongs to the class-II aminoacyl-tRNA synthetase family. As to quaternary structure, homodimer. Zn(2+) serves as cofactor.

Its subcellular location is the cytoplasm. It catalyses the reaction tRNA(Thr) + L-threonine + ATP = L-threonyl-tRNA(Thr) + AMP + diphosphate + H(+). Functionally, catalyzes the attachment of threonine to tRNA(Thr) in a two-step reaction: L-threonine is first activated by ATP to form Thr-AMP and then transferred to the acceptor end of tRNA(Thr). Also edits incorrectly charged L-seryl-tRNA(Thr). The polypeptide is Threonine--tRNA ligase (Staphylothermus marinus (strain ATCC 43588 / DSM 3639 / JCM 9404 / F1)).